Consider the following 86-residue polypeptide: Probable oxaloacetate decarboxylase gamma chain 1 (86 aa).

Residues 11-33 (AATLMVTGMAVVFLFLTLLVYLV) traverse the membrane as a helical segment.

This sequence belongs to the OadG family. As to quaternary structure, heterotrimer of an alpha, a beta and a gamma subunit. It depends on Na(+) as a cofactor.

The protein resides in the cell membrane. The enzyme catalyses oxaloacetate + 2 Na(+)(in) + H(+) = pyruvate + 2 Na(+)(out) + CO2. Its function is as follows. Catalyzes the decarboxylation of oxaloacetate coupled to Na(+) translocation. This chain is Probable oxaloacetate decarboxylase gamma chain 1 (oadG1), found in Vibrio cholerae serotype O1 (strain ATCC 39315 / El Tor Inaba N16961).